Here is a 164-residue protein sequence, read N- to C-terminus: Siroheme decarboxylase alpha subunit (164 aa).

This sequence belongs to the Ahb/Nir family. In terms of assembly, forms a heterodimer composed of AhbA and AhbB.

It carries out the reaction siroheme + 2 H(+) = 12,18-didecarboxysiroheme + 2 CO2. Its pathway is porphyrin-containing compound metabolism; protoheme biosynthesis. Involved in siroheme-dependent heme b biosynthesis. Catalyzes the decarboxylation of siroheme into didecarboxysiroheme. The chain is Siroheme decarboxylase alpha subunit from Oleidesulfovibrio alaskensis (strain ATCC BAA-1058 / DSM 17464 / G20) (Desulfovibrio alaskensis).